Reading from the N-terminus, the 103-residue chain is Large ribosomal subunit protein uL24 (103 aa).

This sequence belongs to the universal ribosomal protein uL24 family. Part of the 50S ribosomal subunit.

Functionally, one of two assembly initiator proteins, it binds directly to the 5'-end of the 23S rRNA, where it nucleates assembly of the 50S subunit. Its function is as follows. One of the proteins that surrounds the polypeptide exit tunnel on the outside of the subunit. The polypeptide is Large ribosomal subunit protein uL24 (Glaesserella parasuis serovar 5 (strain SH0165) (Haemophilus parasuis)).